A 550-amino-acid polypeptide reads, in one-letter code: NAD(P)H-quinone oxidoreductase chain 4 3 (550 aa).

A run of 14 helical transmembrane segments spans residues 5 to 25 (FPWL…IPLL), 36 to 56 (YALI…WQHF), 86 to 106 (ISAP…FSAW), 114 to 134 (LFYA…VAKD), 135 to 155 (LFLF…LVCI), 168 to 188 (FLLY…ALSL), 212 to 232 (MWLY…FPLH), 243 to 263 (SSPV…YGLM), 277 to 297 (FAPL…FSSF), 311 to 331 (VSHM…GING), 332 to 352 (AMLQ…LAGV), 375 to 395 (VFAM…MSGF), 418 to 438 (ITVF…LSML), and 489 to 509 (IFIA…PKLL).

This sequence belongs to the complex I subunit 4 family.

Its subcellular location is the cellular thylakoid membrane. It catalyses the reaction a plastoquinone + NADH + (n+1) H(+)(in) = a plastoquinol + NAD(+) + n H(+)(out). It carries out the reaction a plastoquinone + NADPH + (n+1) H(+)(in) = a plastoquinol + NADP(+) + n H(+)(out). Its function is as follows. NDH-1 shuttles electrons from NAD(P)H, via FMN and iron-sulfur (Fe-S) centers, to quinones in the respiratory chain. The immediate electron acceptor for the enzyme in this species is believed to be plastoquinone. Couples the redox reaction to proton translocation (for every two electrons transferred, four hydrogen ions are translocated across the cytoplasmic membrane), and thus conserves the redox energy in a proton gradient. This Picosynechococcus sp. (strain ATCC 27264 / PCC 7002 / PR-6) (Agmenellum quadruplicatum) protein is NAD(P)H-quinone oxidoreductase chain 4 3.